We begin with the raw amino-acid sequence, 203 residues long: MFEGPVQNLIDELGKLPGIGPKSAQRIAFHLLSVEPQDIDRLTAVLVKVRDDVRFCTVCGNVSDDERCRICSDTRRDASVVCVVEEPKDVQAVERTREFRGRYHVLGGALDPLSGIGPEQLRIRELLSRIGERVDDVGITEVIIATDPNTEGEATATYLVRMLRDMPGLTVTRIASGLPMGGDLEFADELTLGRALTGRRTMV.

Residues Cys56–Cys71 form a C4-type zinc finger. The Toprim domain occupies Ser79–Pro179.

This sequence belongs to the RecR family.

Its function is as follows. May play a role in DNA repair. It seems to be involved in an RecBC-independent recombinational process of DNA repair. It may act with RecF and RecO. The protein is Recombination protein RecR of Mycobacterium leprae (strain TN).